The chain runs to 550 residues: Glucose-6-phosphate isomerase 3 (550 aa).

Glutamate 357 acts as the Proton donor in catalysis. Active-site residues include histidine 388 and lysine 514.

The protein belongs to the GPI family.

The protein resides in the cytoplasm. It carries out the reaction alpha-D-glucose 6-phosphate = beta-D-fructose 6-phosphate. The protein operates within carbohydrate biosynthesis; gluconeogenesis. It functions in the pathway carbohydrate degradation; glycolysis; D-glyceraldehyde 3-phosphate and glycerone phosphate from D-glucose: step 2/4. Catalyzes the reversible isomerization of glucose-6-phosphate to fructose-6-phosphate. This is Glucose-6-phosphate isomerase 3 from Rhodococcus jostii (strain RHA1).